The sequence spans 141 residues: Nucleoside diphosphate kinase (141 aa).

The ATP site is built by lysine 11, phenylalanine 59, arginine 87, threonine 93, arginine 104, and asparagine 114. Histidine 117 serves as the catalytic Pros-phosphohistidine intermediate.

It belongs to the NDK family. As to quaternary structure, homotetramer. The cofactor is Mg(2+).

The protein localises to the cytoplasm. The enzyme catalyses a 2'-deoxyribonucleoside 5'-diphosphate + ATP = a 2'-deoxyribonucleoside 5'-triphosphate + ADP. It carries out the reaction a ribonucleoside 5'-diphosphate + ATP = a ribonucleoside 5'-triphosphate + ADP. Its function is as follows. Major role in the synthesis of nucleoside triphosphates other than ATP. The ATP gamma phosphate is transferred to the NDP beta phosphate via a ping-pong mechanism, using a phosphorylated active-site intermediate. This chain is Nucleoside diphosphate kinase, found in Neisseria gonorrhoeae (strain NCCP11945).